The following is a 146-amino-acid chain: Large-conductance mechanosensitive channel (146 aa).

The next 2 membrane-spanning stretches (helical) occupy residues 14–34 and 81–101; these read VLDL…VNSL and GLFL…FLLV.

This sequence belongs to the MscL family. As to quaternary structure, homopentamer.

It localises to the cell membrane. Its function is as follows. Channel that opens in response to stretch forces in the membrane lipid bilayer. May participate in the regulation of osmotic pressure changes within the cell. The sequence is that of Large-conductance mechanosensitive channel from Symbiobacterium thermophilum (strain DSM 24528 / JCM 14929 / IAM 14863 / T).